We begin with the raw amino-acid sequence, 974 residues long: Leucine-rich repeat receptor-like kinase protein SUNN (974 aa).

The first 20 residues, 1-20 (MKNITCYLLLLCMLFTTCYS), serve as a signal peptide directing secretion. Residues Asn75, Asn104, Asn123, and Asn136 are each glycosylated (N-linked (GlcNAc...) asparagine). 20 LRR repeats span residues 92-116 (LNML…LSKL), 117-141 (TSLR…TFGM), 143-165 (KLEA…IVSL), 166-188 (MKLK…SYSE), 189-213 (FQKL…LSKL), 238-262 (IKSL…LGNL), 263-286 (ENLD…LSSM), 288-309 (SLMS…TFSK), 310-334 (LKNL…IGDL), 335-358 (PNLE…LGSN), 360-382 (KFIY…LCKS), 383-406 (KKLK…IGPC), 407-430 (KSLE…IFQL), 431-454 (PSVQ…ISGN), 456-477 (LGNL…MKNL), 478-501 (RSLQ…VFAL), 503-525 (VLTR…VTQC), 527-549 (SLTA…MKNL), 550-573 (KVLS…IRFM), and 574-598 (TSLT…QFLV). Asn250 and Asn274 each carry an N-linked (GlcNAc...) asparagine glycan. 2 N-linked (GlcNAc...) asparagine glycosylation sites follow: Asn312 and Asn346. N-linked (GlcNAc...) asparagine glycosylation is found at Asn508 and Asn513. Asn556 and Asn585 each carry an N-linked (GlcNAc...) asparagine glycan. A helical transmembrane segment spans residues 635–655 (VVIAIVFATAVLMVIVTLHMM). The region spanning 685-972 (LKEENIIGKG…PPHSTSHNLI (288 aa)) is the Protein kinase domain. ATP contacts are provided by residues 691–699 (IGKGGAGIV) and Lys713. The active-site Proton acceptor is the Asp810.

This sequence belongs to the protein kinase superfamily. Ser/Thr protein kinase family. As to expression, expressed in roots and shoots. Expressed in the vasculature of leaves, petioles, stems and roots.

The protein resides in the cell membrane. The catalysed reaction is L-seryl-[protein] + ATP = O-phospho-L-seryl-[protein] + ADP + H(+). The enzyme catalyses L-threonyl-[protein] + ATP = O-phospho-L-threonyl-[protein] + ADP + H(+). Functionally, LRR receptor kinase involved in the regulation of root growth and root nodule organogenesis. Involved in long distance nodulation signaling events. Involved in the autoregulation of nodulation (AON), a long distance systemic signaling from root to shoot and back again, which allows legumes to limit the number of root nodules formed based on available nitrogen and previous rhizobial colonization. Acts from shoot to root to control AON. Interacts with CLE12 and CLE13 signaling to control nodule numbers. Required for the modulation of shoot-to-root auxin transport in response to altered nitrogen tissue concentrations and in the absence of rhizobia. Shoot-to-root auxin transport influences lateral root density and length. Involved in the regulation of root colonization by arbuscular mycorrhizal (AM) fungi. Interacts with CLE33 and CL53 signaling to repress strigolactone biosynthetic genes and strigolactone content in the roots, and consequently reduces the promotion of further colonization by AM fungi. The chain is Leucine-rich repeat receptor-like kinase protein SUNN from Medicago truncatula (Barrel medic).